Here is a 211-residue protein sequence, read N- to C-terminus: Orotidine 5'-phosphate decarboxylase (211 aa).

Substrate contacts are provided by residues Asp-7, Lys-29, 57–66 (DLKLADIPNT), Ser-109, 162–172 (PGIGAQGGSPV), Gly-185, and Arg-186. The active-site Proton donor is Lys-59.

The protein belongs to the OMP decarboxylase family. Type 1 subfamily. In terms of assembly, homodimer.

The catalysed reaction is orotidine 5'-phosphate + H(+) = UMP + CO2. It functions in the pathway pyrimidine metabolism; UMP biosynthesis via de novo pathway; UMP from orotate: step 2/2. In terms of biological role, catalyzes the decarboxylation of orotidine 5'-monophosphate (OMP) to uridine 5'-monophosphate (UMP). This Pyrococcus furiosus (strain ATCC 43587 / DSM 3638 / JCM 8422 / Vc1) protein is Orotidine 5'-phosphate decarboxylase.